The primary structure comprises 1232 residues: Nitrate reductase alpha subunit (1232 aa).

The 4Fe-4S Mo/W bis-MGD-type domain occupies 53–117; sequence DKVVRSTHGV…SFSWYSYSPT (65 aa). His60, Cys64, Cys68, and Cys103 together coordinate [4Fe-4S] cluster. Asp233 is a Mo-bis(molybdopterin guanine dinucleotide) binding site.

Belongs to the prokaryotic molybdopterin-containing oxidoreductase family. It depends on [4Fe-4S] cluster as a cofactor. Requires Mo-bis(molybdopterin guanine dinucleotide) as cofactor.

It is found in the cell membrane. It carries out the reaction nitrate + a quinol = a quinone + nitrite + H2O. Its function is as follows. The alpha chain is the actual site of nitrate reduction. The protein is Nitrate reductase alpha subunit (narG) of Mycobacterium tuberculosis (strain CDC 1551 / Oshkosh).